The chain runs to 855 residues: DNA mismatch repair protein MutS (855 aa).

618 to 625 (GPNMGGKS) is an ATP binding site.

Belongs to the DNA mismatch repair MutS family.

Its function is as follows. This protein is involved in the repair of mismatches in DNA. It is possible that it carries out the mismatch recognition step. This protein has a weak ATPase activity. The chain is DNA mismatch repair protein MutS from Shewanella loihica (strain ATCC BAA-1088 / PV-4).